A 613-amino-acid chain; its full sequence is Kelch-like protein 36 (613 aa).

A BTB domain is found at 45 to 112 (CDVVLVVEEQ…LYSSELELDG (68 aa)). In terms of domain architecture, BACK spans 147-249 (YLYLQELASI…PEDILLQRVK (103 aa)). Kelch repeat units follow at residues 294 to 343 (CLLF…VLGG), 344 to 395 (FIFI…SIED), 396 to 442 (MLVA…IYKD), 444 to 491 (VYIS…SLGD), 492 to 544 (SIYS…VWQG), and 545 to 593 (RIYI…VCAL).

As to quaternary structure, interacts with CUL3.

It functions in the pathway protein modification; protein ubiquitination. In terms of biological role, probable substrate-specific adapter of an E3 ubiquitin-protein ligase complex which mediates the ubiquitination and subsequent proteasomal degradation of target proteins. This is Kelch-like protein 36 (Klhl36) from Mus musculus (Mouse).